The sequence spans 454 residues: Bifunctional protein GlmU (454 aa).

The tract at residues 1-226 (MALNVVILAA…AIEVEGANNR (226 aa)) is pyrophosphorylase. Residues 8-11 (LAAG), K22, Q73, 78-79 (GT), 100-102 (YGD), G137, E151, N166, and N224 each bind UDP-N-acetyl-alpha-D-glucosamine. D102 is a binding site for Mg(2+). N224 contributes to the Mg(2+) binding site. The interval 227–247 (VQLAQLERAYQAREAEKLMIA) is linker. Positions 248-454 (GANLRDPSRI…GWQRPVKIKK (207 aa)) are N-acetyltransferase. Residues R330 and K348 each coordinate UDP-N-acetyl-alpha-D-glucosamine. H360 serves as the catalytic Proton acceptor. Residues Y363 and N374 each coordinate UDP-N-acetyl-alpha-D-glucosamine. Acetyl-CoA is bound by residues A377, 383–384 (NY), S402, A420, and R437.

In the N-terminal section; belongs to the N-acetylglucosamine-1-phosphate uridyltransferase family. This sequence in the C-terminal section; belongs to the transferase hexapeptide repeat family. In terms of assembly, homotrimer. Requires Mg(2+) as cofactor.

It is found in the cytoplasm. It catalyses the reaction alpha-D-glucosamine 1-phosphate + acetyl-CoA = N-acetyl-alpha-D-glucosamine 1-phosphate + CoA + H(+). The catalysed reaction is N-acetyl-alpha-D-glucosamine 1-phosphate + UTP + H(+) = UDP-N-acetyl-alpha-D-glucosamine + diphosphate. It functions in the pathway nucleotide-sugar biosynthesis; UDP-N-acetyl-alpha-D-glucosamine biosynthesis; N-acetyl-alpha-D-glucosamine 1-phosphate from alpha-D-glucosamine 6-phosphate (route II): step 2/2. The protein operates within nucleotide-sugar biosynthesis; UDP-N-acetyl-alpha-D-glucosamine biosynthesis; UDP-N-acetyl-alpha-D-glucosamine from N-acetyl-alpha-D-glucosamine 1-phosphate: step 1/1. Its pathway is bacterial outer membrane biogenesis; LPS lipid A biosynthesis. In terms of biological role, catalyzes the last two sequential reactions in the de novo biosynthetic pathway for UDP-N-acetylglucosamine (UDP-GlcNAc). The C-terminal domain catalyzes the transfer of acetyl group from acetyl coenzyme A to glucosamine-1-phosphate (GlcN-1-P) to produce N-acetylglucosamine-1-phosphate (GlcNAc-1-P), which is converted into UDP-GlcNAc by the transfer of uridine 5-monophosphate (from uridine 5-triphosphate), a reaction catalyzed by the N-terminal domain. The protein is Bifunctional protein GlmU of Shewanella sp. (strain MR-4).